The sequence spans 445 residues: 2-oxoisovalerate dehydrogenase subunit alpha, mitochondrial (445 aa).

The transit peptide at 1 to 45 (MAVAIAAARVWRPNRGLSQAALLLLWRPGARGLARSHPHRQQQQF) directs the protein to the mitochondrion. Thiamine diphosphate is bound by residues tyrosine 158 and arginine 159. Serine 206 lines the K(+) pocket. Serine 207 is a binding site for thiamine diphosphate. K(+) contacts are provided by proline 208, threonine 211, and glutamine 212. Glutamate 238 is a Mg(2+) binding site. Thiamine diphosphate-binding residues include glycine 239, alanine 240, and arginine 265. Mg(2+) is bound by residues asparagine 267 and tyrosine 269. Histidine 336 contacts thiamine diphosphate. Residue serine 337 is modified to Phosphoserine; by BCKDK. The residue at position 338 (threonine 338) is a Phosphothreonine. Serine 339 and serine 347 each carry phosphoserine. N6-acetyllysine; alternate is present on lysine 356. Lysine 356 carries the post-translational modification N6-succinyllysine; alternate. Lysine 380 carries the post-translational modification N6-succinyllysine.

This sequence belongs to the BCKDHA family. As to quaternary structure, heterotetramer of 2 alpha/BCKDHA and 2 beta chains/BCKDHB that forms the branched-chain alpha-keto acid decarboxylase (E1) component of the BCKD complex. The branched-chain alpha-ketoacid dehydrogenase is a large complex composed of three major building blocks E1, E2 and E3. It is organized around E2, a 24-meric cubic core composed of DBT, to which are associated 6 to 12 copies of E1, and approximately 6 copies of the dehydrogenase E3, a DLD dimer. Interacts with PPM1K. The cofactor is thiamine diphosphate. Requires Mg(2+) as cofactor. In terms of processing, phosphorylated at Ser-337 by BCKDK and dephosphorylated by protein phosphatase PPM1K.

Its subcellular location is the mitochondrion matrix. The enzyme catalyses N(6)-[(R)-lipoyl]-L-lysyl-[protein] + 3-methyl-2-oxobutanoate + H(+) = N(6)-[(R)-S(8)-2-methylpropanoyldihydrolipoyl]-L-lysyl-[protein] + CO2. Together with BCKDHB forms the heterotetrameric E1 subunit of the mitochondrial branched-chain alpha-ketoacid dehydrogenase (BCKD) complex. The BCKD complex catalyzes the multi-step oxidative decarboxylation of alpha-ketoacids derived from the branched-chain amino-acids valine, leucine and isoleucine producing CO2 and acyl-CoA which is subsequently utilized to produce energy. The E1 subunit catalyzes the first step with the decarboxylation of the alpha-ketoacid forming an enzyme-product intermediate. A reductive acylation mediated by the lipoylamide cofactor of E2 extracts the acyl group from the E1 active site for the next step of the reaction. In Macaca fascicularis (Crab-eating macaque), this protein is 2-oxoisovalerate dehydrogenase subunit alpha, mitochondrial (BCKDHA).